Consider the following 115-residue polypeptide: Cobalt-zinc-cadmium resistance protein CzcI (115 aa).

Residues 1–20 form the signal peptide; sequence MRRFVLIFVLLILPFQFSWA. The segment covering 93-102 has biased composition (polar residues); it reads QHSSEFSSLN. The disordered stretch occupies residues 93-115; it reads QHSSEFSSLNARAPDRPQWQRLA.

It is found in the periplasm. Component of the czc cation-efflux system that confers resistance to cobalt, zinc and cadmium. May have a regulatory function. The protein is Cobalt-zinc-cadmium resistance protein CzcI (czcI) of Cupriavidus metallidurans (strain ATCC 43123 / DSM 2839 / NBRC 102507 / CH34) (Ralstonia metallidurans).